A 188-amino-acid polypeptide reads, in one-letter code: dCTP deaminase (188 aa).

Residues 111–116 (KSTYAR), 135–137 (TLE), glutamine 156, tyrosine 170, and glutamine 180 each bind dCTP. Catalysis depends on glutamate 137, which acts as the Proton donor/acceptor.

The protein belongs to the dCTP deaminase family. As to quaternary structure, homotrimer.

The catalysed reaction is dCTP + H2O + H(+) = dUTP + NH4(+). It functions in the pathway pyrimidine metabolism; dUMP biosynthesis; dUMP from dCTP (dUTP route): step 1/2. Its function is as follows. Catalyzes the deamination of dCTP to dUTP. This chain is dCTP deaminase, found in Francisella philomiragia subsp. philomiragia (strain ATCC 25017 / CCUG 19701 / FSC 153 / O#319-036).